A 131-amino-acid chain; its full sequence is Small ribosomal subunit protein uS8 (131 aa).

This sequence belongs to the universal ribosomal protein uS8 family. In terms of assembly, part of the 30S ribosomal subunit. Contacts proteins S5 and S12.

Its function is as follows. One of the primary rRNA binding proteins, it binds directly to 16S rRNA central domain where it helps coordinate assembly of the platform of the 30S subunit. This is Small ribosomal subunit protein uS8 from Rhizorhabdus wittichii (strain DSM 6014 / CCUG 31198 / JCM 15750 / NBRC 105917 / EY 4224 / RW1) (Sphingomonas wittichii).